The sequence spans 467 residues: MTELDQFWPACLARLEAELSSQQFNTWIKPLTAEAGDEGIALFAPNRFIMQFIKDRFLPRIEELAVELVGELPVELRLGAPTARPAAPVAGNSQPKAKEPAKAAASAPAAPSPAKQAAVKAIGGSHESTRLNPSFTFDTLVTGKGNQLARAAAMQIAENPGDQAYNPLFVYGGVGLGKTHLIQAIGNHVFQKNPQAKIRYIHAERYVADIMRAYQHKAFDEFKRYYHSLDLLLIDDIQFFAGKNRTQEEFFYAFNALIEGGKQVIMTCDSYPKQIEGMEERLISRFSWGLTVEIQPPELEMRVAILMKKAEADSIKLEHNVAFFIAQNVRSNVRELEGALKRVVAYARFTSQNITLELVKEALKDILAAGNRQVTVDAIQKTVAEYYKIKLSDMHSKKRSRDIARPRQVAMALAKELTQLSLPNIGDAFGGRDHTTVLHACKTITEMRASDADIAHDYEALLSMLRN.

The interval 1–79 (MTELDQFWPA…GELPVELRLG (79 aa)) is domain I, interacts with DnaA modulators. The interval 79–129 (GAPTARPAAPVAGNSQPKAKEPAKAAASAPAAPSPAKQAAVKAIGGSHEST) is domain II. The segment at 84-126 (RPAAPVAGNSQPKAKEPAKAAASAPAAPSPAKQAAVKAIGGSH) is disordered. Residues 102–121 (KAAASAPAAPSPAKQAAVKA) show a composition bias toward low complexity. Positions 130-347 (RLNPSFTFDT…GALKRVVAYA (218 aa)) are domain III, AAA+ region. Glycine 175, glycine 177, lysine 178, and threonine 179 together coordinate ATP. Positions 348–467 (RFTSQNITLE…YEALLSMLRN (120 aa)) are domain IV, binds dsDNA.

This sequence belongs to the DnaA family. As to quaternary structure, oligomerizes as a right-handed, spiral filament on DNA at oriC.

It localises to the cytoplasm. In terms of biological role, plays an essential role in the initiation and regulation of chromosomal replication. ATP-DnaA binds to the origin of replication (oriC) to initiate formation of the DNA replication initiation complex once per cell cycle. Binds the DnaA box (a 9 base pair repeat at the origin) and separates the double-stranded (ds)DNA. Forms a right-handed helical filament on oriC DNA; dsDNA binds to the exterior of the filament while single-stranded (ss)DNA is stabiized in the filament's interior. The ATP-DnaA-oriC complex binds and stabilizes one strand of the AT-rich DNA unwinding element (DUE), permitting loading of DNA polymerase. After initiation quickly degrades to an ADP-DnaA complex that is not apt for DNA replication. Binds acidic phospholipids. The chain is Chromosomal replication initiator protein DnaA from Chromobacterium violaceum (strain ATCC 12472 / DSM 30191 / JCM 1249 / CCUG 213 / NBRC 12614 / NCIMB 9131 / NCTC 9757 / MK).